The following is a 135-amino-acid chain: Class I hydrophobin dewB (135 aa).

A signal peptide spans 1–17 (MKFIGLATLSLFALASA). Cystine bridges form between C35/C109, C43/C103, C44/C84, and C110/C128.

It belongs to the fungal hydrophobin family. In terms of assembly, self-assembles to form functional amyloid fibrils called rodlets. Self-assembly into fibrillar rodlets occurs spontaneously at hydrophobic:hydrophilic interfaces and the rodlets further associate laterally to form amphipathic monolayers.

Its subcellular location is the secreted. It localises to the spore wall. Aerial growth, conidiation, and dispersal of filamentous fungi in the environment rely upon a capability of their secreting small amphipathic proteins called hydrophobins (HPBs) with low sequence identity. Class I can self-assemble into an outermost layer of rodlet bundles on aerial cell surfaces, conferring cellular hydrophobicity that supports fungal growth, development and dispersal; whereas Class II form highly ordered films at water-air interfaces through intermolecular interactions but contribute nothing to the rodlet structure. DewB is a class I hydrophobin that contributes to the hydrophobicity of the spore surface. In Emericella nidulans (strain FGSC A4 / ATCC 38163 / CBS 112.46 / NRRL 194 / M139) (Aspergillus nidulans), this protein is Class I hydrophobin dewB.